The following is a 629-amino-acid chain: Bifunctional protein ArgHA (629 aa).

Residues 1 to 499 (MALWGGRFSQ…NLPRSRSDLV (499 aa)) are argininosuccinate lyase. An N-acetyltransferase domain is found at 464 to 598 (ISIRAARLTD…EKVLKDCDMC (135 aa)). The segment at 500–629 (KAVGTFAVTE…INLKAEKLAS (130 aa)) is amino-acid acetyltransferase.

The protein in the N-terminal section; belongs to the lyase 1 family. Argininosuccinate lyase subfamily. It in the C-terminal section; belongs to the acetyltransferase family. ArgA subfamily.

It localises to the cytoplasm. It carries out the reaction 2-(N(omega)-L-arginino)succinate = fumarate + L-arginine. The catalysed reaction is L-glutamate + acetyl-CoA = N-acetyl-L-glutamate + CoA + H(+). Its pathway is amino-acid biosynthesis; L-arginine biosynthesis; N(2)-acetyl-L-ornithine from L-glutamate: step 1/4. It participates in amino-acid biosynthesis; L-arginine biosynthesis; L-arginine from L-ornithine and carbamoyl phosphate: step 3/3. The polypeptide is Bifunctional protein ArgHA (argHA) (Moritella abyssi).